Reading from the N-terminus, the 348-residue chain is Phosphoribosylformylglycinamidine cyclo-ligase (348 aa).

It belongs to the AIR synthase family.

The protein resides in the cytoplasm. The catalysed reaction is 2-formamido-N(1)-(5-O-phospho-beta-D-ribosyl)acetamidine + ATP = 5-amino-1-(5-phospho-beta-D-ribosyl)imidazole + ADP + phosphate + H(+). It functions in the pathway purine metabolism; IMP biosynthesis via de novo pathway; 5-amino-1-(5-phospho-D-ribosyl)imidazole from N(2)-formyl-N(1)-(5-phospho-D-ribosyl)glycinamide: step 2/2. This Ruegeria pomeroyi (strain ATCC 700808 / DSM 15171 / DSS-3) (Silicibacter pomeroyi) protein is Phosphoribosylformylglycinamidine cyclo-ligase.